A 204-amino-acid chain; its full sequence is Dephospho-CoA kinase (204 aa).

In terms of domain architecture, DPCK spans 4 to 201 (VIGLTGGIAS…EKYLAMCKKN (198 aa)). 12–17 (ASGKTT) serves as a coordination point for ATP.

This sequence belongs to the CoaE family.

The protein localises to the cytoplasm. It carries out the reaction 3'-dephospho-CoA + ATP = ADP + CoA + H(+). Its pathway is cofactor biosynthesis; coenzyme A biosynthesis; CoA from (R)-pantothenate: step 5/5. Functionally, catalyzes the phosphorylation of the 3'-hydroxyl group of dephosphocoenzyme A to form coenzyme A. In Vibrio parahaemolyticus serotype O3:K6 (strain RIMD 2210633), this protein is Dephospho-CoA kinase.